The sequence spans 232 residues: Putative N-acetylmannosamine-6-phosphate 2-epimerase (232 aa).

Belongs to the NanE family.

The catalysed reaction is an N-acyl-D-glucosamine 6-phosphate = an N-acyl-D-mannosamine 6-phosphate. It functions in the pathway amino-sugar metabolism; N-acetylneuraminate degradation; D-fructose 6-phosphate from N-acetylneuraminate: step 3/5. Converts N-acetylmannosamine-6-phosphate (ManNAc-6-P) to N-acetylglucosamine-6-phosphate (GlcNAc-6-P). This Borreliella burgdorferi (strain ZS7) (Borrelia burgdorferi) protein is Putative N-acetylmannosamine-6-phosphate 2-epimerase.